The chain runs to 581 residues: Aspartate--tRNA ligase (581 aa).

E170 provides a ligand contact to L-aspartate. The segment at 194-197 (QLFK) is aspartate. Residue R216 participates in L-aspartate binding. ATP is bound by residues 216–218 (RDE) and Q225. H439 contacts L-aspartate. Residue E468 participates in ATP binding. An L-aspartate-binding site is contributed by R475. 520–523 (GFDR) lines the ATP pocket.

Belongs to the class-II aminoacyl-tRNA synthetase family. Type 1 subfamily. Homodimer.

Its subcellular location is the cytoplasm. It catalyses the reaction tRNA(Asp) + L-aspartate + ATP = L-aspartyl-tRNA(Asp) + AMP + diphosphate. In terms of biological role, catalyzes the attachment of L-aspartate to tRNA(Asp) in a two-step reaction: L-aspartate is first activated by ATP to form Asp-AMP and then transferred to the acceptor end of tRNA(Asp). This chain is Aspartate--tRNA ligase, found in Thermosipho melanesiensis (strain DSM 12029 / CIP 104789 / BI429).